Reading from the N-terminus, the 467-residue chain is MRTAPSLRRCVCLLLAAILDLARGYLTVNIEPLPPVVAGDAVTLKCNFKTDGRMREIVWYRVTDGGTIKQKIFTFDAMFSTNYSHMENYRKREDLVYQSTVRLPEVRISDNGPYECHVGIYDRATREKVVLASGNIFLNVMAPPTSIEVVAADTPAPFSRYQAQNFTLVCIVSGGKPAPMVYFKRDGEPIDAVPLSEPPAASSGPLQDSRPFRSLLHRDLDDTKMQKSLSLLDAENRGGRPYTERPSRGLTPDPNILLQPTTENIPETVVSREFPRWVHSAEPTYFLRHSRTPSSDGTVEVRALLTWTLNPQIDNEALFSCEVKHPALSMPMQAEVTLVAPKGPKIVMTPSRARVGDTVRILVHGFQNEVFPEPMFTWTRVGSRLLDGSAEFDGKELVLERVPAELNGSMYRCTAQNPLGSTDTHTRLIVFENPNIPRGTEDSNGSIGPTGARLTLVLALTVILELT.

Positions 1 to 24 (MRTAPSLRRCVCLLLAAILDLARG) are cleaved as a signal peptide. The region spanning 25–132 (YLTVNIEPLP…RATREKVVLA (108 aa)) is the Ig-like 1 domain. Cys-46 and Cys-116 are disulfide-bonded. Asn-82 and Asn-165 each carry an N-linked (GlcNAc...) asparagine glycan. The interval 229–259 (LSLLDAENRGGRPYTERPSRGLTPDPNILLQ) is disordered. The segment covering 234 to 247 (AENRGGRPYTERPS) has biased composition (basic and acidic residues). Residues 344–429 (PKIVMTPSRA…GSTDTHTRLI (86 aa)) enclose the Ig-like 2 domain. N-linked (GlcNAc...) asparagine glycosylation is found at Asn-407 and Asn-444.

In terms of assembly, interacts (Ig-like 1 domain) with NRXN2 (via Laminin G-like 1 domain) in a trans-interaction manner.

The protein localises to the postsynaptic cell membrane. Functionally, involved in synaptic inhibition in the brain. Selectively regulates inhibitory presynaptic differentiation through interacting with presynaptic NRXN2. The sequence is that of Immunoglobulin superfamily member 21 from Homo sapiens (Human).